The following is a 464-amino-acid chain: uncharacterized protein (464 aa).

The 59-residue stretch at 13–71 folds into the TRAM domain; it reads MLKVSDIIQIKIDKIVFGGEGLGYYNGFAVFVPMSIPEDELEIEIISIKKTYARGLIKN. S-adenosyl-L-methionine is bound by residues Gln295, Tyr324, Glu345, and Asp393. Cys420 acts as the Nucleophile in catalysis.

This sequence belongs to the class I-like SAM-binding methyltransferase superfamily. RNA M5U methyltransferase family.

This is an uncharacterized protein from Fusobacterium nucleatum subsp. nucleatum (strain ATCC 25586 / DSM 15643 / BCRC 10681 / CIP 101130 / JCM 8532 / KCTC 2640 / LMG 13131 / VPI 4355).